The sequence spans 499 residues: MSDLHHLSIAKLVDGLQNQHFSSVELTDHFLKRINTLDKKVNSFITIDEEGARQAAQQADDRRSAGDNSVLLGLPMAHKDLFCTKGLLTTSGSKILHNFVSPYDATIVSNIREAGAVCLGKLNMDEFAMGSDNESSYYGAVHNPWDLSRVPGGSSGGSAAAVAAGFVPFATGSDTGGSIRQPASFCGLTGIKPTYGRVSRFGMIAYASSLDQAGTFGRSAQDCAYLLQPMAGHDARDATSIKRDVPDYVADLQSAAAQADADKPFSGLRIGVAKEYFGKGLDAEVDANVRAALKQYEELGATIVEVNITDPEITLATYYMLAPAEASSNLSRFDGVRFGYRCEDPKDLADLYTRSRSEGFGVEVQRRILMGTYALSAGYFDAYYTKAQKVRRLILQDFKNAFEKCDVIASPTAPTAAYKLDAALDPVTMYLGDVYTIGVNLAGLPAISMPAGFTESGLPIGLQLIGNHWDDSKLLSTAHIFQQHTDHHTKLSATAQESI.

Catalysis depends on charge relay system residues Lys-79 and Ser-154. Residue Ser-178 is the Acyl-ester intermediate of the active site.

Belongs to the amidase family. GatA subfamily. In terms of assembly, heterotrimer of A, B and C subunits.

It catalyses the reaction L-glutamyl-tRNA(Gln) + L-glutamine + ATP + H2O = L-glutaminyl-tRNA(Gln) + L-glutamate + ADP + phosphate + H(+). Functionally, allows the formation of correctly charged Gln-tRNA(Gln) through the transamidation of misacylated Glu-tRNA(Gln) in organisms which lack glutaminyl-tRNA synthetase. The reaction takes place in the presence of glutamine and ATP through an activated gamma-phospho-Glu-tRNA(Gln). The chain is Glutamyl-tRNA(Gln) amidotransferase subunit A from Psychrobacter sp. (strain PRwf-1).